The sequence spans 132 residues: Putative esterase Ta0293 (132 aa).

Belongs to the thioesterase PaaI family.

In Thermoplasma acidophilum (strain ATCC 25905 / DSM 1728 / JCM 9062 / NBRC 15155 / AMRC-C165), this protein is Putative esterase Ta0293.